The chain runs to 122 residues: Large ribosomal subunit protein uL18 (122 aa).

This sequence belongs to the universal ribosomal protein uL18 family. Part of the 50S ribosomal subunit; part of the 5S rRNA/L5/L18/L25 subcomplex. Contacts the 5S and 23S rRNAs.

Its function is as follows. This is one of the proteins that bind and probably mediate the attachment of the 5S RNA into the large ribosomal subunit, where it forms part of the central protuberance. This chain is Large ribosomal subunit protein uL18, found in Mycobacterium ulcerans (strain Agy99).